The following is a 357-amino-acid chain: Heat-inducible transcription repressor HrcA (357 aa).

This sequence belongs to the HrcA family.

In terms of biological role, negative regulator of class I heat shock genes (grpE-dnaK-dnaJ and groELS operons). Prevents heat-shock induction of these operons. The chain is Heat-inducible transcription repressor HrcA from Chlorobium limicola (strain DSM 245 / NBRC 103803 / 6330).